Reading from the N-terminus, the 371-residue chain is UDP-N-acetylglucosamine--N-acetylmuramyl-(pentapeptide) pyrophosphoryl-undecaprenol N-acetylglucosamine transferase (371 aa).

Residues 15-17 (TGG), Asn126, Arg172, Ser199, Ile256, 275-280 (ALTVSE), and Gln301 contribute to the UDP-N-acetyl-alpha-D-glucosamine site.

The protein belongs to the glycosyltransferase 28 family. MurG subfamily.

It localises to the cell inner membrane. It catalyses the reaction di-trans,octa-cis-undecaprenyl diphospho-N-acetyl-alpha-D-muramoyl-L-alanyl-D-glutamyl-meso-2,6-diaminopimeloyl-D-alanyl-D-alanine + UDP-N-acetyl-alpha-D-glucosamine = di-trans,octa-cis-undecaprenyl diphospho-[N-acetyl-alpha-D-glucosaminyl-(1-&gt;4)]-N-acetyl-alpha-D-muramoyl-L-alanyl-D-glutamyl-meso-2,6-diaminopimeloyl-D-alanyl-D-alanine + UDP + H(+). It participates in cell wall biogenesis; peptidoglycan biosynthesis. Functionally, cell wall formation. Catalyzes the transfer of a GlcNAc subunit on undecaprenyl-pyrophosphoryl-MurNAc-pentapeptide (lipid intermediate I) to form undecaprenyl-pyrophosphoryl-MurNAc-(pentapeptide)GlcNAc (lipid intermediate II). This Francisella tularensis subsp. holarctica (strain FTNF002-00 / FTA) protein is UDP-N-acetylglucosamine--N-acetylmuramyl-(pentapeptide) pyrophosphoryl-undecaprenol N-acetylglucosamine transferase.